We begin with the raw amino-acid sequence, 442 residues long: Alpha-1,6-mannosyl-glycoprotein 2-beta-N-acetylglucosaminyltransferase (442 aa).

Residues 1–9 (MRFRIYKRK) are Cytoplasmic-facing. A helical; Signal-anchor for type II membrane protein membrane pass occupies residues 10-29 (VLILTLVVAACGFVLWSSNG). At 30-442 (RQRKNDALAP…ELCKSYRRLQ (413 aa)) the chain is on the lumenal side. N-linked (GlcNAc...) asparagine glycosylation is found at N64 and N81. Substrate-binding positions include 118 to 122 (QVHNR) and D149. A disulfide bridge links C191 with C205. 224–228 (QTKHH) contacts substrate. D256 provides a ligand contact to Mn(2+). Residues C278 and C281 are joined by a disulfide bond. Residue R293 coordinates substrate. 3 disulfide bridges follow: C329–C352, C334–C435, and C373–C381. H369 is a Mn(2+) binding site.

Belongs to the glycosyltransferase 16 (GT16) protein family. In terms of assembly, homodimer. It depends on Mn(2+) as a cofactor. In terms of tissue distribution, detected in liver (at protein level). Detected in liver, brain, thymus and spleen.

The protein localises to the golgi apparatus membrane. It catalyses the reaction an N(4)-{beta-D-GlcNAc-(1-&gt;2)-alpha-D-Man-(1-&gt;3)-[alpha-D-Man-(1-&gt;6)]-beta-D-Man-(1-&gt;4)-beta-D-GlcNAc-(1-&gt;4)-beta-D-GlcNAc}-L-asparaginyl-[protein] + UDP-N-acetyl-alpha-D-glucosamine = N(4)-{beta-D-GlcNAc-(1-&gt;2)-alpha-D-Man-(1-&gt;3)-[beta-D-GlcNAc-(1-&gt;2)-alpha-D-Man-(1-&gt;6)]-beta-D-Man-(1-&gt;4)-beta-D-GlcNAc-(1-&gt;4)-beta-D-GlcNAc}-L-asparaginyl-[protein] + UDP + H(+). Its pathway is protein modification; protein glycosylation. Plays an essential role in protein N-glycosylation. Catalyzes the transfer of N-acetylglucosamine (GlcNAc) onto the free terminal mannose moiety in the core structure of the nascent N-linked glycan chain, giving rise to the second branch in complex glycans. In Rattus norvegicus (Rat), this protein is Alpha-1,6-mannosyl-glycoprotein 2-beta-N-acetylglucosaminyltransferase (Mgat2).